Reading from the N-terminus, the 280-residue chain is Polyamine aminopropyltransferase 2 (280 aa).

Residues 2-237 (ELWLDEALEL…GIIGFTYCSK (236 aa)) enclose the PABS domain. An S-methyl-5'-thioadenosine-binding site is contributed by glutamine 33. Histidine 64 and aspartate 88 together coordinate spermidine. S-methyl-5'-thioadenosine contacts are provided by residues glutamate 108 and 139 to 140 (DG). Residue aspartate 157 is the Proton acceptor of the active site. 157 to 160 (DSSD) lines the spermidine pocket. Proline 164 provides a ligand contact to S-methyl-5'-thioadenosine.

It belongs to the spermidine/spermine synthase family. As to quaternary structure, homodimer or homotetramer.

It is found in the cytoplasm. The enzyme catalyses S-adenosyl 3-(methylsulfanyl)propylamine + putrescine = S-methyl-5'-thioadenosine + spermidine + H(+). Its pathway is amine and polyamine biosynthesis; spermidine biosynthesis; spermidine from putrescine: step 1/1. Functionally, catalyzes the irreversible transfer of a propylamine group from the amino donor S-adenosylmethioninamine (decarboxy-AdoMet) to putrescine (1,4-diaminobutane) to yield spermidine. This chain is Polyamine aminopropyltransferase 2, found in Leptospira interrogans serogroup Icterohaemorrhagiae serovar Lai (strain 56601).